The following is a 77-amino-acid chain: U14-theraphotoxin-Cg1a 3 (77 aa).

The first 21 residues, 1 to 21, serve as a signal peptide directing secretion; that stretch reads MKTSVLLVILGIAAITVQCTA. A propeptide spanning residues 22–49 is cleaved from the precursor; sequence SESVEQDSLRTFVDTVLGWNAEMASEAR. 3 disulfide bridges follow: Cys50-Cys64, Cys57-Cys69, and Cys63-Cys75. Lysine amide is present on Lys77.

This sequence belongs to the neurotoxin 10 (Hwtx-1) family. 65 (Jztx-21) subfamily. Expressed by the venom gland.

It localises to the secreted. Functionally, probable ion channel inhibitor. In Chilobrachys guangxiensis (Chinese earth tiger tarantula), this protein is U14-theraphotoxin-Cg1a 3.